The primary structure comprises 191 residues: Fe/S biogenesis protein NfuA (191 aa).

[4Fe-4S] cluster-binding residues include Cys149 and Cys152.

The protein belongs to the NfuA family. Homodimer. It depends on [4Fe-4S] cluster as a cofactor.

In terms of biological role, involved in iron-sulfur cluster biogenesis. Binds a 4Fe-4S cluster, can transfer this cluster to apoproteins, and thereby intervenes in the maturation of Fe/S proteins. Could also act as a scaffold/chaperone for damaged Fe/S proteins. This chain is Fe/S biogenesis protein NfuA, found in Citrobacter koseri (strain ATCC BAA-895 / CDC 4225-83 / SGSC4696).